Here is a 479-residue protein sequence, read N- to C-terminus: Chromosomal replication initiator protein DnaA (479 aa).

Residues 1–71 (MNLTQIWKAT…RNALARVVGY (71 aa)) form a domain I, interacts with DnaA modulators region. The domain II stretch occupies residues 71 to 138 (YPVQVQVLIA…LDLASAMRSG (68 aa)). A compositionally biased stretch (polar residues) spans 86–99 (TEPSPSLTLSNGSR). A disordered region spans residues 86-106 (TEPSPSLTLSNGSRLMSDPEP). The domain III, AAA+ region stretch occupies residues 139–355 (MLNPRYTFSS…GSLNRVAAYA (217 aa)). G183, G185, K186, and T187 together coordinate ATP. Residues 356–479 (ELNRAPITIE…IRERIQMLRG (124 aa)) form a domain IV, binds dsDNA region.

The protein belongs to the DnaA family. In terms of assembly, oligomerizes as a right-handed, spiral filament on DNA at oriC.

Its subcellular location is the cytoplasm. Its function is as follows. Plays an essential role in the initiation and regulation of chromosomal replication. ATP-DnaA binds to the origin of replication (oriC) to initiate formation of the DNA replication initiation complex once per cell cycle. Binds the DnaA box (a 9 base pair repeat at the origin) and separates the double-stranded (ds)DNA. Forms a right-handed helical filament on oriC DNA; dsDNA binds to the exterior of the filament while single-stranded (ss)DNA is stabiized in the filament's interior. The ATP-DnaA-oriC complex binds and stabilizes one strand of the AT-rich DNA unwinding element (DUE), permitting loading of DNA polymerase. After initiation quickly degrades to an ADP-DnaA complex that is not apt for DNA replication. Binds acidic phospholipids. This Chloroflexus aurantiacus (strain ATCC 29366 / DSM 635 / J-10-fl) protein is Chromosomal replication initiator protein DnaA.